The sequence spans 204 residues: Large ribosomal subunit protein bL25 (204 aa).

It belongs to the bacterial ribosomal protein bL25 family. CTC subfamily. In terms of assembly, part of the 50S ribosomal subunit; part of the 5S rRNA/L5/L18/L25 subcomplex. Contacts the 5S rRNA. Binds to the 5S rRNA independently of L5 and L18.

This is one of the proteins that binds to the 5S RNA in the ribosome where it forms part of the central protuberance. The sequence is that of Large ribosomal subunit protein bL25 from Burkholderia pseudomallei (strain 668).